Reading from the N-terminus, the 224-residue chain is BOS complex subunit TMEM147 (224 aa).

A helical transmembrane segment spans residues 1–21; sequence MTLFHFGNCFALAYFPYFITY. At 22 to 34 the chain is on the cytoplasmic side; the sequence is KCSGLSEYNAFWK. The helical transmembrane segment at 35 to 58 threads the bilayer; it reads CVQAGVTYLFVQLCKMLFLATFFP. Over 59–66 the chain is Lumenal; it reads TWEGGIYD. The helical transmembrane segment at 67 to 88 threads the bilayer; it reads FIGEFMKASVDVADLIGLNLVM. Topologically, residues 89 to 98 are cytoplasmic; that stretch reads SRNAGKGEYK. Residues 99–124 traverse the membrane as a helical segment; the sequence is IMVAALGWATAELIMSRCIPLWVGAR. Topologically, residues 125-129 are lumenal; sequence GIEFD. A helical membrane pass occupies residues 130-155; sequence WKYIQMSIDSNISLVHYIVASAQVWM. The Cytoplasmic portion of the chain corresponds to 156–164; it reads ITRYDLYHT. The chain crosses the membrane as a helical span at residues 165-187; that stretch reads FRPAVLLLMFLSVYKAFVMETFV. The Lumenal segment spans residues 188–194; that stretch reads HLCSLGS. Residues 195–216 traverse the membrane as a helical segment; it reads WTALLARAVVTGLLALSTLALY. The Cytoplasmic segment spans residues 217-224; sequence VAVVNVHS.

Belongs to the TMEM147 family. In terms of assembly, component of the back of Sec61 (BOS) complex, composed of NCLN/Nicalin, NOMO1 and TMEM147. The BOS complex is part of the multi-pass translocon (MPT) complex, composed of three subcomplexes, the GEL complex (composed of RAB5IF/OPTI and TMCO1), the BOS complex (composed of NCLN/Nicalin, NOMO1 and TMEM147) and the PAT complex (composed of WDR83OS/Asterix and CCDC47). The MPT complex associates with the SEC61 complex. Interacts with CHRM3, CHRM1 and AVPR2. Interacts with LBR; promoting LBR localization to the nucleus inner membrane. Interacts with DHCR7.

Its subcellular location is the endoplasmic reticulum membrane. It is found in the nucleus membrane. The protein localises to the cell membrane. In terms of biological role, component of the multi-pass translocon (MPT) complex that mediates insertion of multi-pass membrane proteins into the lipid bilayer of membranes. The MPT complex takes over after the SEC61 complex: following membrane insertion of the first few transmembrane segments of proteins by the SEC61 complex, the MPT complex occludes the lateral gate of the SEC61 complex to promote insertion of subsequent transmembrane regions. Also acts as a negative regulator of CHRM3 function, most likely by interfering with its trafficking to the cell membrane. Negatively regulates CHRM3-mediated calcium mobilization and activation of RPS6KA1/p90RSK activity. Regulates LBR localization to the nucleus inner membrane. The protein is BOS complex subunit TMEM147 of Canis lupus familiaris (Dog).